A 354-amino-acid chain; its full sequence is NADH-ubiquinone oxidoreductase chain 2 (354 aa).

10 helical membrane passes run 5–25 (ILMVLIANVVLGTLIVLSSHH), 26–46 (WFTLWVGLEMNTLSILPILSY), 60–80 (FLVQSVSAGIVLNVVIIQAWL), 96–116 (FLMTLALGLKLGLFPCHYWFP), 122–142 (VGFIQGLVLSTWQKIAPFAVL), 149–169 (LNISLLASLGVLSVLVGGWGG), 198–218 (VSVACVMLVAYIIINSSVFFM), 242–262 (AGLVLSILSLGGLPPLFGFLI), 274–294 (GCFILAGVLVMGSLLSLFFYL), and 330–350 (VLLSVSFGISSLGLVCLPVFI).

It belongs to the complex I subunit 2 family.

It is found in the mitochondrion inner membrane. The catalysed reaction is a ubiquinone + NADH + 5 H(+)(in) = a ubiquinol + NAD(+) + 4 H(+)(out). Functionally, core subunit of the mitochondrial membrane respiratory chain NADH dehydrogenase (Complex I) that is believed to belong to the minimal assembly required for catalysis. Complex I functions in the transfer of electrons from NADH to the respiratory chain. The immediate electron acceptor for the enzyme is believed to be ubiquinone. This Patiria pectinifera (Starfish) protein is NADH-ubiquinone oxidoreductase chain 2 (ND2).